Consider the following 504-residue polypeptide: U3 snoRNP-associated protein-like YAO (504 aa).

The segment at 1–120 is disordered; that stretch reads MKYNNEKKKG…DDDDDEDDDE (120 aa). Positions 20 to 33 are enriched in basic and acidic residues; it reads GSNERDPFFEEEPK. Acidic residues-rich tracts occupy residues 41–54 and 70–81; these read DDDD…DAEE and EVEDEDEFADET. Positions 89-106 are enriched in basic and acidic residues; the sequence is LAEEMLNRRREAMRRERE. The segment covering 107–120 has biased composition (acidic residues); the sequence is EADNDDDDDEDDDE. 7 WD repeats span residues 159–198, 220–259, 262–301, 304–342, 344–382, 413–452, and 456–496; these read KHRR…TDKY, NHSR…HVQA, GHRN…FITE, GHQG…RMIY, APAS…PVFV, SANS…IRPL, and PLTG…QNGV.

The protein belongs to the WD repeat RRP9 family. As to expression, expressed in tissues with active in cell division such as shoot apexes, root tips, lateral root primordia, embryos, endosperm, pollen grains and embryo sacs.

It localises to the nucleus. Its subcellular location is the nucleolus. Its function is as follows. Component of a nucleolar small nuclear ribonucleoprotein particle (snoRNP) thought to participate in the processing and modification of pre-ribosomal RNA. Essential for embryogenesis. Plays a critical role in embryo sac development and gametic cell fate. Required for the correct positioning of the first division plane of zygote. May function during early embryogenesis. The polypeptide is U3 snoRNP-associated protein-like YAO (Arabidopsis thaliana (Mouse-ear cress)).